Here is an 894-residue protein sequence, read N- to C-terminus: Exocyst complex component 1 (894 aa).

2 coiled-coil regions span residues 152–199 and 205–259; these read GDEE…LQVL and QSIM…NHLI. A disordered region spans residues 437-495; the sequence is SKESKKFATLPRKESAVKQETESLHGSSGKLTGSTSSLNKLSVQSSGSRRSQSSSLLDM. A compositionally biased stretch (basic and acidic residues) spans 438–459; sequence KESKKFATLPRKESAVKQETES. Positions 460–491 are enriched in low complexity; it reads LHGSSGKLTGSTSSLNKLSVQSSGSRRSQSSS. At Ser470 the chain carries Phosphoserine. Thr471 carries the post-translational modification Phosphothreonine. A phosphoserine mark is found at Ser473, Ser487, and Ser501.

It belongs to the SEC3 family. The exocyst complex is composed of EXOC1, EXOC2, EXOC3, EXOC4, EXOC5, EXOC6, EXOC7 and EXOC8. Interacts with EEF1A1. Interacts with SLC6A9; interaction increases the transporter capacity of SLC6A9 probably by promoting its insertion into the cell membrane.

The protein localises to the midbody. Its subcellular location is the midbody ring. It is found in the cytoplasm. The protein resides in the perinuclear region. It localises to the cell membrane. Its function is as follows. Component of the exocyst complex involved in the docking of exocytic vesicles with fusion sites on the plasma membrane. This Mus musculus (Mouse) protein is Exocyst complex component 1 (Exoc1).